Reading from the N-terminus, the 190-residue chain is MYEVRFHGRGGQGSVMASGMLAAAMVEEGKYAVSIPSFGFERRGAPVVSFLRMSDREIRQLTNIYQPDCIVCVDPTLTKSVDIFAGMKAGGTLVQATHHPLSELALPDCVSTVGLLDAVKIALEIFKRPITNTLMLGAFAKTTGVVSLESLKRALEDSEFRDAGLAQNMTALERGYAEVAVHHIERRAAA.

In terms of assembly, dimer of heteropentamers composed of an alpha (PadG), a beta (PadI), a gamma (PadE), a delta (PadF) and an epsilon (PadH) subunit.

The catalysed reaction is phenylglyoxylate + NAD(+) + CoA = benzoyl-CoA + CO2 + NADH. With respect to regulation, activated by magnesium ions and thiamine diphosphate. Functionally, involved in the anaerobic metabolism of phenylalanine and phenylacetate. Catalyzes the oxidative decarboxylation of phenylglyoxylate to benzoyl-CoA and CO(2). It can also react slowly with 2-oxo-3-methylbutanoate and use different electron acceptors such as benzyl viologen, methyl viologen, FAD or FMN, but NAD seems to be the physiological electron acceptor. Also catalyzes an isotope exchange between CO(2) and the carboxyl group which proves partial or complete reversibility of the oxidative decarboxylation reaction. This Aromatoleum evansii (Azoarcus evansii) protein is NADH-dependent phenylglyoxylate dehydrogenase subunit gamma (padE).